The chain runs to 379 residues: Cytochrome b (379 aa).

Transmembrane regions (helical) follow at residues 33–53 (FGSLLGMCLMIQILTGLFLAM), 77–98 (WLIRYLHANGASMFFICLFIHV), 113–133 (WNIGIILFLMTMATAFVGYVL), and 178–198 (FFAFHFILPFIIAAFALVHLL). Heme b-binding residues include His-83 and His-97. Heme b contacts are provided by His-182 and His-196. Residue His-201 participates in a ubiquinone binding. The next 4 helical transmembrane spans lie at 226-246 (TKDLLGIFLLLLVLMILALFF), 288-308 (LGGVLALVLSILILAAFPLLN), 320-340 (VTQVIYWIFIANLLVLTWIGG), and 347-367 (FTMIGQIASITYFAIITILMP).

It belongs to the cytochrome b family. The cytochrome bc1 complex contains 11 subunits: 3 respiratory subunits (MT-CYB, CYC1 and UQCRFS1), 2 core proteins (UQCRC1 and UQCRC2) and 6 low-molecular weight proteins (UQCRH/QCR6, UQCRB/QCR7, UQCRQ/QCR8, UQCR10/QCR9, UQCR11/QCR10 and a cleavage product of UQCRFS1). This cytochrome bc1 complex then forms a dimer. Requires heme b as cofactor.

It localises to the mitochondrion inner membrane. Component of the ubiquinol-cytochrome c reductase complex (complex III or cytochrome b-c1 complex) that is part of the mitochondrial respiratory chain. The b-c1 complex mediates electron transfer from ubiquinol to cytochrome c. Contributes to the generation of a proton gradient across the mitochondrial membrane that is then used for ATP synthesis. The protein is Cytochrome b (MT-CYB) of Akodon fumeus (Smoky grass mouse).